The following is a 157-amino-acid chain: SsrA-binding protein (157 aa).

It belongs to the SmpB family.

The protein resides in the cytoplasm. In terms of biological role, required for rescue of stalled ribosomes mediated by trans-translation. Binds to transfer-messenger RNA (tmRNA), required for stable association of tmRNA with ribosomes. tmRNA and SmpB together mimic tRNA shape, replacing the anticodon stem-loop with SmpB. tmRNA is encoded by the ssrA gene; the 2 termini fold to resemble tRNA(Ala) and it encodes a 'tag peptide', a short internal open reading frame. During trans-translation Ala-aminoacylated tmRNA acts like a tRNA, entering the A-site of stalled ribosomes, displacing the stalled mRNA. The ribosome then switches to translate the ORF on the tmRNA; the nascent peptide is terminated with the 'tag peptide' encoded by the tmRNA and targeted for degradation. The ribosome is freed to recommence translation, which seems to be the essential function of trans-translation. The protein is SsrA-binding protein of Chlorobium chlorochromatii (strain CaD3).